The primary structure comprises 133 residues: ATP synthase epsilon chain, chloroplastic (133 aa).

The protein belongs to the ATPase epsilon chain family. F-type ATPases have 2 components, CF(1) - the catalytic core - and CF(0) - the membrane proton channel. CF(1) has five subunits: alpha(3), beta(3), gamma(1), delta(1), epsilon(1). CF(0) has three main subunits: a, b and c.

It localises to the plastid. It is found in the chloroplast thylakoid membrane. Functionally, produces ATP from ADP in the presence of a proton gradient across the membrane. The chain is ATP synthase epsilon chain, chloroplastic from Psilotum nudum (Whisk fern).